A 275-amino-acid polypeptide reads, in one-letter code: LexA repressor (275 aa).

The segment at 1 to 50 (MKRSTPRPARSQAALTTSSEESPDRVERGGDGVATVTDFPDGPPDETGLT) is disordered. Residues 73 to 93 (MREIGEAVGLTSTSSVAHQLM) constitute a DNA-binding region (H-T-H motif). A disordered region spans residues 114–151 (RSAESAVPDASAGHSPAADRAPSARRPPRGPSPIDSNP). Active-site for autocatalytic cleavage activity residues include serine 199 and lysine 236.

This sequence belongs to the peptidase S24 family. As to quaternary structure, homodimer.

It carries out the reaction Hydrolysis of Ala-|-Gly bond in repressor LexA.. In terms of biological role, represses a number of genes involved in the response to DNA damage (SOS response), including recA and lexA. In the presence of single-stranded DNA, RecA interacts with LexA causing an autocatalytic cleavage which disrupts the DNA-binding part of LexA, leading to derepression of the SOS regulon and eventually DNA repair. In Acidothermus cellulolyticus (strain ATCC 43068 / DSM 8971 / 11B), this protein is LexA repressor.